The following is a 279-amino-acid chain: MATH domain and coiled-coil domain-containing protein At1g31390 (279 aa).

The 129-residue stretch at 6-134 (EKKITWTIKN…NGDVKIVVEV (129 aa)) folds into the MATH domain. Residues 235–271 (KLDWLEKKLKEVCEARVQEIDEEWKDLTDLKENWSSD) are a coiled coil.

The sequence is that of MATH domain and coiled-coil domain-containing protein At1g31390 from Arabidopsis thaliana (Mouse-ear cress).